The chain runs to 531 residues: Zinc finger protein 703-B (531 aa).

Polar residues predominate over residues M1–T10. Disordered regions lie at residues M1 to A28, S88 to I249, and V295 to A318. Composition is skewed to low complexity over residues T19 to A28 and R113 to S122. The segment covering S171–G180 has biased composition (polar residues). Residues C183–V198 are compositionally biased toward basic and acidic residues. The segment covering N199 to A215 has biased composition (polar residues). Positions S216–S227 are enriched in low complexity. The C2H2-type zinc finger occupies H404–H432.

The protein belongs to the Elbow/Noc family.

Its subcellular location is the nucleus. It is found in the cytoplasm. In terms of biological role, transcriptional corepressor which does not bind directly to DNA and may regulate transcription through recruitment of histone deacetylases to gene promoters. Regulates cell adhesion, migration and proliferation. Involved in specification of the lateral neural plate border (NPB). May be required for segmental gene expression during hindbrain development. The chain is Zinc finger protein 703-B (znf703-b) from Xenopus laevis (African clawed frog).